The chain runs to 154 residues: 3-hydroxyacyl-[acyl-carrier-protein] dehydratase FabZ (154 aa).

Histidine 60 is a catalytic residue.

It belongs to the thioester dehydratase family. FabZ subfamily.

Its subcellular location is the cytoplasm. The enzyme catalyses a (3R)-hydroxyacyl-[ACP] = a (2E)-enoyl-[ACP] + H2O. In terms of biological role, involved in unsaturated fatty acids biosynthesis. Catalyzes the dehydration of short chain beta-hydroxyacyl-ACPs and long chain saturated and unsaturated beta-hydroxyacyl-ACPs. This Actinobacillus pleuropneumoniae serotype 5b (strain L20) protein is 3-hydroxyacyl-[acyl-carrier-protein] dehydratase FabZ.